A 476-amino-acid polypeptide reads, in one-letter code: uncharacterized protein (476 aa).

Positions 1 to 24 (MIRKSATGVIVALAVIWGGGTWYT) are cleaved as a signal peptide.

This sequence to E.coli YdgA and H.influenzae HI_1236.

This is an uncharacterized protein from Escherichia coli (strain K12).